We begin with the raw amino-acid sequence, 504 residues long: MEEFQGYLELDKYQQHDFLYPLIFREYIYALAYDHGLNRSILLDNVGYENKYSLLIIKRLISRMYKQNNFIISANDSNQNKFLGYNKNLYSQMISEGFAVIVEIPFSLRLVSSLEATEIVKSYNLRSIHSIFPFLEDKFSHLNYVSDVLIPYPIHLEILVQTLRYWVKDPSSLHLLRLFLHEYYNLNSLITPNKFIFSKSNPRLFLLLYNSHVCEYESILLFIRNQSSHLRLTSSGIFFERIHFYEKRKYPGEEVFSNDFPSAILWFFKDPFMHYVRYQGKSILASKDSALLMNKWKYYLVNLWQCHSYVWSQPGRICINQLSKHSIYFLGYFSSMRPNLSVVRSQMLENSFIMDNAMKKFDTLVPIIPLIRSLAKVKFCNTLGHPISKSAWADSSDFDIIDRFVRICRNLSHYYSGSSRKKSLYRIKYILRLSCVKTLARKHKSTVRTFLKRLGSKLLEEFFTEEQQILSLIFPRASYTLKKFYRGRIWYLDIFCINDLANHE.

It belongs to the intron maturase 2 family. MatK subfamily.

The protein resides in the plastid. Its subcellular location is the chloroplast. Functionally, usually encoded in the trnK tRNA gene intron. Probably assists in splicing its own and other chloroplast group II introns. The chain is Maturase K from Adenostoma fasciculatum (Chamise).